The primary structure comprises 1378 residues: Cell surface hyaluronidase (1378 aa).

Residues 1–77 are disordered; sequence MQVNDGPSSH…GNRREQAQNQ (77 aa). Over 1-82 the chain is Cytoplasmic; it reads MQVNDGPSSH…QAQNQQRKNT (82 aa). Residues 36–58 are compositionally biased toward pro residues; that stretch reads RSPPPAKAPPPPPLKPPVPPPAR. The helical; Signal-anchor for type II membrane protein transmembrane segment at 83 to 103 threads the bilayer; sequence YICVGIFFGIFLLILILVLSL. Residues 104–1378 lie on the Extracellular side of the membrane; the sequence is TSKDVLDENC…MDLELLKKIS (1275 aa). Residues 121 to 247 enclose the G8 domain; sequence RSWKPGHDLK…ERMSWTFLTR (127 aa). N-linked (GlcNAc...) asparagine glycans are attached at residues N171, N264, N360, N527, and N639. In terms of domain architecture, GG-type lectin 1 spans 257 to 414; that stretch reads GDHAFQKNFS…YPTTGFQVDA (158 aa). Residues 672-694 form a PbH1 1 repeat; the sequence is HPNNHLISNSAAGSQDAGIWYVF. N696 is a glycosylation site (N-linked (GlcNAc...) asparagine). Residues 714-736 form a PbH1 2 repeat; sequence TPLGTFFNNRVHSNFKAGLFIDR. N742, N854, N905, N996, N1069, N1160, and N1221 each carry an N-linked (GlcNAc...) asparagine glycan. Positions 1203 to 1363 constitute a GG-type lectin 2 domain; sequence NSYLQTQIKS…LEEYSCPPKK (161 aa).

It belongs to the CEMIP family. It depends on Ca(2+) as a cofactor.

It is found in the cell membrane. The catalysed reaction is Random hydrolysis of (1-&gt;4)-linkages between N-acetyl-beta-D-glucosamine and D-glucuronate residues in hyaluronate.. Its function is as follows. Cell surface hyaluronidase that mediates the initial cleavage of extracellular high-molecular-weight hyaluronan into intermediate-size hyaluronan. Acts as a regulator of angiogenesis in embryos by mediating degradation of extracellular hyaluronan, thereby promoting VEGF signaling. Acts as a regulator of heart development during myocardial and endocardial morphogenesis: involved in the looping stage of heart morphogenesis. Stimulates migration of endocardial cells and increases both myocardial and endocardial fusion. Involved in the restriction of endocardial cushions (ECs) formation to the atrioventricular canal (AVC). Also required for muscle fiber attachment. Is very specific to hyaluronan; not able to cleave chondroitin sulfate or dermatan sulfate. The chain is Cell surface hyaluronidase (cemip2) from Danio rerio (Zebrafish).